A 419-amino-acid polypeptide reads, in one-letter code: CCA-adding enzyme (419 aa).

Residues G8 and R11 each coordinate ATP. CTP-binding residues include G8 and R11. The Mg(2+) site is built by D21 and D23. R91, R137, and R140 together coordinate ATP. Residues R91, R137, and R140 each coordinate CTP.

It belongs to the tRNA nucleotidyltransferase/poly(A) polymerase family. Bacterial CCA-adding enzyme type 2 subfamily. It depends on Mg(2+) as a cofactor.

It catalyses the reaction a tRNA precursor + 2 CTP + ATP = a tRNA with a 3' CCA end + 3 diphosphate. The enzyme catalyses a tRNA with a 3' CCA end + 2 CTP + ATP = a tRNA with a 3' CCACCA end + 3 diphosphate. In terms of biological role, catalyzes the addition and repair of the essential 3'-terminal CCA sequence in tRNAs without using a nucleic acid template. Adds these three nucleotides in the order of C, C, and A to the tRNA nucleotide-73, using CTP and ATP as substrates and producing inorganic pyrophosphate. tRNA 3'-terminal CCA addition is required both for tRNA processing and repair. Also involved in tRNA surveillance by mediating tandem CCA addition to generate a CCACCA at the 3' terminus of unstable tRNAs. While stable tRNAs receive only 3'-terminal CCA, unstable tRNAs are marked with CCACCA and rapidly degraded. This is CCA-adding enzyme from Buchnera aphidicola subsp. Baizongia pistaciae (strain Bp).